The following is a 272-amino-acid chain: Orotidine 5'-phosphate decarboxylase (272 aa).

Residue Lys95 is the Proton donor of the active site.

Belongs to the OMP decarboxylase family. Type 2 subfamily.

It catalyses the reaction orotidine 5'-phosphate + H(+) = UMP + CO2. The protein operates within pyrimidine metabolism; UMP biosynthesis via de novo pathway; UMP from orotate: step 2/2. The chain is Orotidine 5'-phosphate decarboxylase from Cupriavidus metallidurans (strain ATCC 43123 / DSM 2839 / NBRC 102507 / CH34) (Ralstonia metallidurans).